The following is a 664-amino-acid chain: DNA ligase (664 aa).

Residues 32–36 and 80–81 each bind NAD(+); these read DKEYD and SL. The active-site N6-AMP-lysine intermediate is the Lys-122. Residues Arg-144, Glu-178, and Lys-314 each coordinate NAD(+). Residues Cys-407, Cys-410, Cys-423, and Cys-429 each coordinate Zn(2+). One can recognise a BRCT domain in the interval 587-664; sequence IDENPFMGKT…NEEEFSNKIK (78 aa).

Belongs to the NAD-dependent DNA ligase family. LigA subfamily. Mg(2+) is required as a cofactor. Mn(2+) serves as cofactor.

The catalysed reaction is NAD(+) + (deoxyribonucleotide)n-3'-hydroxyl + 5'-phospho-(deoxyribonucleotide)m = (deoxyribonucleotide)n+m + AMP + beta-nicotinamide D-nucleotide.. In terms of biological role, DNA ligase that catalyzes the formation of phosphodiester linkages between 5'-phosphoryl and 3'-hydroxyl groups in double-stranded DNA using NAD as a coenzyme and as the energy source for the reaction. It is essential for DNA replication and repair of damaged DNA. The chain is DNA ligase from Clostridium botulinum (strain Kyoto / Type A2).